A 369-amino-acid chain; its full sequence is Glutamate 5-kinase (369 aa).

An ATP-binding site is contributed by K8. S49, D136, and N148 together coordinate substrate. ATP contacts are provided by residues 168-169 (TD) and 211-217 (TGGMATK). The PUA domain occupies 276-354 (KGELWLDEGA…TELANILGYA (79 aa)).

Belongs to the glutamate 5-kinase family.

The protein resides in the cytoplasm. It carries out the reaction L-glutamate + ATP = L-glutamyl 5-phosphate + ADP. It participates in amino-acid biosynthesis; L-proline biosynthesis; L-glutamate 5-semialdehyde from L-glutamate: step 1/2. Functionally, catalyzes the transfer of a phosphate group to glutamate to form L-glutamate 5-phosphate. The chain is Glutamate 5-kinase from Thermosynechococcus vestitus (strain NIES-2133 / IAM M-273 / BP-1).